A 346-amino-acid chain; its full sequence is Phosphate acyltransferase (346 aa).

It belongs to the PlsX family. In terms of assembly, homodimer. Probably interacts with PlsY.

The protein localises to the cytoplasm. The catalysed reaction is a fatty acyl-[ACP] + phosphate = an acyl phosphate + holo-[ACP]. Its pathway is lipid metabolism; phospholipid metabolism. Catalyzes the reversible formation of acyl-phosphate (acyl-PO(4)) from acyl-[acyl-carrier-protein] (acyl-ACP). This enzyme utilizes acyl-ACP as fatty acyl donor, but not acyl-CoA. The sequence is that of Phosphate acyltransferase from Brucella abortus (strain S19).